The following is a 175-amino-acid chain: Inosine/xanthosine triphosphatase (175 aa).

Substrate is bound at residue 8–13 (TTNPAK). Residues Glu-38 and Glu-68 each coordinate Mg(2+). 68–69 (EA) is a substrate binding site.

It belongs to the YjjX NTPase family. As to quaternary structure, homodimer. The cofactor is Mg(2+). It depends on Mn(2+) as a cofactor.

It catalyses the reaction XTP + H2O = XDP + phosphate + H(+). The enzyme catalyses ITP + H2O = IDP + phosphate + H(+). Its function is as follows. Phosphatase that hydrolyzes non-canonical purine nucleotides such as XTP and ITP to their respective diphosphate derivatives. Probably excludes non-canonical purines from DNA/RNA precursor pool, thus preventing their incorporation into DNA/RNA and avoiding chromosomal lesions. In Escherichia coli O127:H6 (strain E2348/69 / EPEC), this protein is Inosine/xanthosine triphosphatase (yjjX).